Consider the following 133-residue polypeptide: Putative biopolymer transport protein ExbD-like 2 (133 aa).

Topologically, residues 1–9 (MKKVESMNV) are cytoplasmic. Residues 10–30 (VPFIDIMLVLLVIVLTTASFV) traverse the membrane as a helical segment. Topologically, residues 31 to 133 (QTSKLPISIP…LVEDKKNQKN (103 aa)) are periplasmic.

The protein belongs to the ExbD/TolR family.

It is found in the cell inner membrane. This is Putative biopolymer transport protein ExbD-like 2 from Helicobacter pylori (strain J99 / ATCC 700824) (Campylobacter pylori J99).